The sequence spans 104 residues: UPF0147 protein MK1586 (104 aa).

It belongs to the UPF0147 family.

The protein is UPF0147 protein MK1586 of Methanopyrus kandleri (strain AV19 / DSM 6324 / JCM 9639 / NBRC 100938).